The chain runs to 487 residues: Serine/threonine-protein kinase 4 (487 aa).

An N-acetylmethionine modification is found at M1. T3 carries the post-translational modification Phosphothreonine. Residues 30–281 (FDVLEKLGEG…ATQLLQHPFV (252 aa)) form the Protein kinase domain. Residues 36 to 44 (LGEGSYGSV) and K59 each bind ATP. The Proton acceptor role is filled by D149. T183 is subject to Phosphothreonine; by autocatalysis. S265 is subject to Phosphoserine. The stretch at 290-310 (LRDLINEAMDVKLKRQESQQR) forms a coiled coil. Over residues 303–312 (KRQESQQREV) the composition is skewed to basic and acidic residues. The interval 303–332 (KRQESQQREVDQDDEENSEEDEMDSGTMVR) is disordered. Positions 313 to 326 (DQDDEENSEEDEMD) are enriched in acidic residues. Phosphoserine is present on S320. T340 and T367 each carry phosphothreonine. T387 bears the Phosphothreonine; by PKB/AKT1 mark. 2 positions are modified to phosphoserine: S410 and S414. Position 433 is a phosphotyrosine (Y433). The SARAH domain occupies 433-480 (YEFLKSWTVEDLQKRLLALDPMMEQEIEEIRQKYQSKRQPILDAIEAK).

The protein belongs to the protein kinase superfamily. STE Ser/Thr protein kinase family. STE20 subfamily. As to quaternary structure, homodimer; mediated via the coiled-coil region. Interacts with NORE1, which inhibits autoactivation. Interacts with and stabilizes SAV1. Interacts with RASSF1. Interacts with FOXO3. Interacts with RASSF2 (via SARAH domain). Interacts with AR, PKB/AKT1, TNNI3 and SIRT1. Interacts with DLG5 (via PDZ domain 3). Interacts with MARK3 and SCRIB in the presence of DLG5. Mg(2+) is required as a cofactor. Post-translationally, autophosphorylated on serine and threonine residues. Phosphorylation at Thr-387 by PKB/AKT1, leads to inhibition of its: kinase activity, nuclear translocation and autophosphorylation at Thr-183. It also diminishes its cleavage by caspases and its ability to phosphorylate FOXO3. In terms of processing, proteolytically cleaved by caspase-3 during apoptosis at Asp-326 and Asp-349 resulting in a 37 kDa or a 39 kDa subunit respectively. The 39 kDa subunit is further cleaved into the 37 kDa form. Proteolytic cleavage results in kinase activation and nuclear translocation of the truncated form (MST1/N). It is less likely that cleavage at Asp-349 is a prerequisite for activation as this site is not conserved in the murine ortholog.

The protein localises to the cytoplasm. Its subcellular location is the nucleus. It catalyses the reaction L-seryl-[protein] + ATP = O-phospho-L-seryl-[protein] + ADP + H(+). The enzyme catalyses L-threonyl-[protein] + ATP = O-phospho-L-threonyl-[protein] + ADP + H(+). Inhibited by the C-terminal non-catalytic region. Activated by caspase-cleavage. Full activation also requires homodimerization and autophosphorylation of Thr-183. Activated by RASSF1 which acts by preventing its dephosphorylation. Its function is as follows. Stress-activated, pro-apoptotic kinase which, following caspase-cleavage, enters the nucleus and induces chromatin condensation followed by internucleosomal DNA fragmentation. Key component of the Hippo signaling pathway which plays a pivotal role in organ size control and tumor suppression by restricting proliferation and promoting apoptosis. The core of this pathway is composed of a kinase cascade wherein STK3/MST2 and STK4/MST1, in complex with its regulatory protein SAV1, phosphorylates and activates LATS1/2 in complex with its regulatory protein MOB1, which in turn phosphorylates and inactivates YAP1 oncoprotein and WWTR1/TAZ. Phosphorylation of YAP1 by LATS2 inhibits its translocation into the nucleus to regulate cellular genes important for cell proliferation, cell death, and cell migration. STK3/MST2 and STK4/MST1 are required to repress proliferation of mature hepatocytes, to prevent activation of facultative adult liver stem cells (oval cells), and to inhibit tumor formation. Phosphorylates 'Ser-14' of histone H2B (H2BS14ph) during apoptosis. Phosphorylates FOXO3 upon oxidative stress, which results in its nuclear translocation and cell death initiation. Phosphorylates MOBKL1A, MOBKL1B and RASSF2. Phosphorylates TNNI3 (cardiac Tn-I) and alters its binding affinity to TNNC1 (cardiac Tn-C) and TNNT2 (cardiac Tn-T). Phosphorylates FOXO1 on 'Ser-212' and regulates its activation and stimulates transcription of PMAIP1 in a FOXO1-dependent manner. Phosphorylates SIRT1 and inhibits SIRT1-mediated p53/TP53 deacetylation, thereby promoting p53/TP53 dependent transcription and apoptosis upon DNA damage. Acts as an inhibitor of PKB/AKT1. Phosphorylates AR on 'Ser-650' and suppresses its activity by intersecting with PKB/AKT1 signaling and antagonizing formation of AR-chromatin complexes. The sequence is that of Serine/threonine-protein kinase 4 (STK4) from Macaca mulatta (Rhesus macaque).